The following is a 243-amino-acid chain: MSTAITRQIVLDTETTGMNQIGAHYEGHKIIEIGAVEVVNRRLTGNNFHVYLKPDRLVDPEAFGVHGIADEFLLDKPTFAEVADEFMDYIRGAELVIHNAAFDIGFMDYEFSLLKRDIPKTNTFCKVTDSLAVARKMFPGKRNSLDALCARYEIDNSKRTLHGALLDAQILAEVYLAMTGGQTSMAFAMEGETQQQQGEATIQRIVRQASKLRVVFATDEEIAAHEARLDLVQKKGGSCLWRA.

2 residues coordinate a divalent metal cation: Asp12 and Glu14. Substrate contacts are provided by Asp12, Glu14, Glu61, and His66. His162 serves as the catalytic Proton acceptor. Asp167 contributes to the a divalent metal cation binding site. A substrate-binding site is contributed by Asp167.

In terms of assembly, in a ternary complex this subunit contacts both the beta sliding clamp (dnaN) and the polymerase subunit (dnaE). The DNA polymerase III holoenzyme complex contains at least 10 different subunits organized into 3 functionally essential subassemblies: the Pol III core, the beta sliding clamp processivity factor and the clamp-loading complex. The Pol III core (subunits alpha, epsilon and theta) contains the polymerase and the 3'-5' exonuclease proofreading activities. The polymerase is tethered to the template via the dimeric beta sliding clamp processivity factor. The clamp loader (also called gamma complex) assembles the beta sliding clamp onto the primed template and plays a central role in the organization and communication at the replication fork. The clamp-loading complex contains delta, delta', psi and chi, and 3 copies of either or both of two different DnaX proteins, gamma and tau. The DNA replisome complex has a single clamp loader (3 tau and 1 each of delta, delta', psi and chi subunits) which binds 3 Pol III cores (1 core on the leading strand and 2 on the lagging strand) each with a beta sliding clamp dimer. Additional proteins in the replisome are other copies of gamma, psi and chi, Ssb, DNA helicase and RNA primase. Mg(2+) is required as a cofactor. The cofactor is Mn(2+).

It carries out the reaction DNA(n) + a 2'-deoxyribonucleoside 5'-triphosphate = DNA(n+1) + diphosphate. In terms of biological role, DNA polymerase III is a complex, multichain enzyme responsible for most of the replicative synthesis in bacteria. The epsilon subunit contain the editing function and is a proofreading 3'-5' exonuclease. Contacts both the beta sliding clamp (dnaN) and the polymerase subunit (dnaE), stabilizing their interaction. This chain is DNA polymerase III subunit epsilon (dnaQ), found in Escherichia coli (strain K12).